The sequence spans 209 residues: Neurotrophin-4 (209 aa).

Residues 1-21 (MLPRHSCSLLLFLFLLPSVPM) form the signal peptide. The propeptide occupies 22 to 79 (EPHPPSSTLPPFLAPEWDLLSPRVALSRGAPAGPPLLFLLEAGAYGEPAGAPANRSRR). Asn-75 carries an N-linked (GlcNAc...) asparagine glycan. 3 cysteine pairs are disulfide-bonded: Cys-96-Cys-169, Cys-140-Cys-198, and Cys-157-Cys-200.

Belongs to the NGF-beta family.

The protein localises to the secreted. Target-derived survival factor for peripheral sensory sympathetic neurons. May promote ameloblast differentiation and subsequent reduction in proliferation of ameloblasts. The sequence is that of Neurotrophin-4 (Ntf4) from Mus musculus (Mouse).